The following is a 407-amino-acid chain: L-amino-acid oxidase (407 aa).

Cysteines 10 and 94 form a disulfide. The N-linked (GlcNAc...) asparagine glycan is linked to N93. H144 provides a ligand contact to substrate. V182 is an FAD binding site. C252 and C333 are joined by a disulfide. N-linked (GlcNAc...) asparagine glycosylation is present at N282. Y293 is a binding site for substrate. FAD contacts are provided by residues E378 and 385 to 390; that span reads GWIDST. 385-386 lines the substrate pocket; that stretch reads GW.

The protein belongs to the flavin monoamine oxidase family. FIG1 subfamily. In terms of assembly, homodimer; non-covalently linked. The cofactor is FAD. As to expression, expressed by the venom gland.

It localises to the secreted. The catalysed reaction is an L-alpha-amino acid + O2 + H2O = a 2-oxocarboxylate + H2O2 + NH4(+). It catalyses the reaction L-leucine + O2 + H2O = 4-methyl-2-oxopentanoate + H2O2 + NH4(+). It carries out the reaction L-phenylalanine + O2 + H2O = 3-phenylpyruvate + H2O2 + NH4(+). The enzyme catalyses L-isoleucine + O2 + H2O = (S)-3-methyl-2-oxopentanoate + H2O2 + NH4(+). The catalysed reaction is L-aspartate + O2 + H2O = oxaloacetate + H2O2 + NH4(+). It catalyses the reaction L-lysine + O2 + H2O = 6-amino-2-oxohexanoate + H2O2 + NH4(+). It carries out the reaction L-glutamate + O2 + H2O = H2O2 + 2-oxoglutarate + NH4(+). Its function is as follows. Catalyzes an oxidative deamination of predominantly hydrophobic and aromatic L-amino acids, thus producing hydrogen peroxide that may contribute to the diverse toxic effects of this enzyme. Is highly active on L-Leu followed by L-Phe and L-Ile, moderately active on L-Asp, L-Glu, and L-Lys, and not active on L-Pro, L-Asn, L-Gly, L-Ser and L-Cys. Exhibits diverse biological activities such as antibacterial activity (Minimal inhibitory concentrations (MIC) are 9.0 ug/ml against S.aureus, 144.0 ug/ml against P.aeruginosa and 288.0 ug/ml against E.coli) and inhibition of ADP- and TMVA-induced platelet aggregation. Effects of snake L-amino oxidases on platelets are controversial, since they either induce aggregation or inhibit agonist-induced aggregation. These different effects are probably due to different experimental conditions. Unlike other snake venom L-amino acid oxidases, does not induce hemorrhage. This protein may also induce hemolysis, edema, apoptosis and have antiparasitic activities. In Daboia siamensis (Eastern Russel's viper), this protein is L-amino-acid oxidase.